The chain runs to 55 residues: Large ribosomal subunit protein bL33 (55 aa).

The protein belongs to the bacterial ribosomal protein bL33 family.

This Enterobacter sp. (strain 638) protein is Large ribosomal subunit protein bL33.